A 265-amino-acid polypeptide reads, in one-letter code: MAARMAFADKPNHFINFPLAQFSGFMGKYLKLQSQLVEMGLDCKLQKVPHVSITLLDIKADQYKQVEFAIQEIIDDLAAYEGDIVFDNPHMLGRCLVLDVKGFEELHEDIVEILRRRGCTADQSRQWIPHCTVAQFDEEKEIKEMQFYFKLPFYLKHNNLLTDARLELVKIGSSKVGGFYCSELSIWCGERLCYKPPTPKFSDIFGYCCIDKIRGDLEIGDLPPDDEEAWAELSYHYQRNTYFFRHVHDNSIYFRTVCRMKGCMC.

This sequence belongs to the coronaviruses ns2a protein family.

The protein resides in the host cytoplasm. In terms of biological role, not essential for virus replication in transformed murine cells. In Mus musculus (Mouse), this protein is Non-structural protein 2a.